A 504-amino-acid polypeptide reads, in one-letter code: MMTISLIWGIAMVVCCCIWVIFDRRRRKAGEPPLENGLIPYLGCALKFGSNPLEFLRANQRKHGHVFTCKLMGKYVHFITNSLSYHKVLCHGKYFDWKKFHYTTSAKAFGHRSIDPNDGNTTENINNTFTKTLQGDALHSLSEAMMQNLQFVLRPPDLPKSKSDAWVTEGMYAFCYRVMFEAGYLTLFGRDTSKPDTQRVLILNNLNSFKQFDQVFPALVAGLPIHLFKAAHKAREQLAEGLKHENLSVRDQVSELIRLRMFLNDTLSTFDDMEKAKTHLAILWASQANTIPATFWSLFQMIRSPDALRAASEEVNGALQSAGQKLSSEGNAIYLDQIQLNNLPVLDSIIKEALRLSSASLNIRTAKEDFTLHLEDGSYNIRKDDIIALYPQLMHLDPAIYPDPLTFKYDRYLDENKKAKTSFYSNGNKLKYFYMPFGSGATICPGRLFAVQEIKQFLILMLSYFELELVESHVKCPPLDQSRAGLGILPPLNDIEFKYKLKHL.

A heme-binding site is contributed by C444.

It belongs to the cytochrome P450 family. It depends on heme as a cofactor.

It is found in the endoplasmic reticulum membrane. The protein resides in the microsome membrane. The catalysed reaction is cholesterol + reduced [NADPH--hemoprotein reductase] + O2 = 7alpha-hydroxycholesterol + oxidized [NADPH--hemoprotein reductase] + H2O + H(+). It functions in the pathway lipid metabolism; bile acid biosynthesis. Functionally, catalyzes a rate-limiting step in cholesterol catabolism and bile acid biosynthesis by introducing a hydrophilic moiety at position 7 of cholesterol. Important for cholesterol homeostasis. This chain is Cholesterol 7-alpha-monooxygenase (CYP7A1), found in Cricetulus griseus (Chinese hamster).